Consider the following 375-residue polypeptide: Ubl carboxyl-terminal hydrolase 18 (375 aa).

The tract at residues 18–45 (ESPQSPADLEEKKEEDSNMKREQPRERP) is disordered. Positions 26-45 (LEEKKEEDSNMKREQPRERP) are enriched in basic and acidic residues. Residues 55–373 (VGLHNIGQTC…TAYLLVYMKM (319 aa)) enclose the USP domain. Catalysis depends on Cys-64, which acts as the Nucleophile. His-321 serves as the catalytic Proton acceptor.

Belongs to the peptidase C19 family. In terms of assembly, interacts with STAT2; the interaction is direct. Interacts with IFNAR2; indirectly via STAT2, it negatively regulates the assembly of the ternary interferon-IFNAR1-IFNAR2 complex and inhibits type I interferon signaling. Interacts with STING1. Interacts with USP20.

It catalyses the reaction Thiol-dependent hydrolysis of ester, thioester, amide, peptide and isopeptide bonds formed by the C-terminal Gly of ubiquitin (a 76-residue protein attached to proteins as an intracellular targeting signal).. In terms of biological role, interferon-induced ISG15-specific protease that plays a crucial role for maintaining a proper balance of ISG15-conjugated proteins in cells. Regulates protein ISGylation by efficiently cleaving ISG15 conjugates linked via isopeptide bonds. Regulates T-cell activation and T-helper 17 (Th17) cell differentiation by deubiquitinating TAK1, likely to keep TAK1-TAB complexes in steady conditions. In turn, restricts activation of NF-kappa-B, NFAT, and JNK as well as expression of IL2 in T-cells after TCR activation. Acts as a molecular adapter with USP20 to promote innate antiviral response through deubiquitinating STING1. Involved also in the negative regulation of the inflammatory response triggered by type I interferon. Upon recruitment by STAT2 to the type I interferon receptor subunit IFNAR2 interferes with the assembly of the ternary interferon-IFNAR1-IFNAR2 complex and acts as a negative regulator of the type I interferon signaling pathway. The chain is Ubl carboxyl-terminal hydrolase 18 (USP18) from Pongo abelii (Sumatran orangutan).